A 182-amino-acid chain; its full sequence is Methionine-R-sulfoxide reductase B2, mitochondrial (182 aa).

A mitochondrion-targeting transit peptide spans 1 to 20 (MARLLWLLRGLTLGTAPRRA). The region spanning 51-180 (KSEWQKKLTP…NSVALKFKPR (130 aa)) is the MsrB domain. 4 residues coordinate Zn(2+): Cys-90, Cys-93, Cys-146, and Cys-149. Cys-169 acts as the Nucleophile in catalysis.

This sequence belongs to the MsrB Met sulfoxide reductase family. As to quaternary structure, interacts with DAOA; the interaction is direct. Requires Zn(2+) as cofactor. In terms of tissue distribution, ubiquitous. Detected in retina, ocular ciliary body, skeletal muscle, heart, colon, bone marrow, cerebellum, small intestine, fetal brain, fetal liver, kidney, spinal cord, lung, placenta and prostate.

The protein localises to the mitochondrion. It catalyses the reaction L-methionyl-[protein] + [thioredoxin]-disulfide + H2O = L-methionyl-(R)-S-oxide-[protein] + [thioredoxin]-dithiol. It carries out the reaction [thioredoxin]-disulfide + L-methionine + H2O = L-methionine (R)-S-oxide + [thioredoxin]-dithiol. Functionally, methionine-sulfoxide reductase that specifically reduces methionine (R)-sulfoxide back to methionine. While in many cases, methionine oxidation is the result of random oxidation following oxidative stress, methionine oxidation is also a post-translational modification that takes place on specific residue. Upon oxidative stress, may play a role in the preservation of mitochondrial integrity by decreasing the intracellular reactive oxygen species build-up through its scavenging role, hence contributing to cell survival and protein maintenance. This chain is Methionine-R-sulfoxide reductase B2, mitochondrial (MSRB2), found in Homo sapiens (Human).